Reading from the N-terminus, the 412-residue chain is Putative competence-damage inducible protein (412 aa).

The protein belongs to the CinA family.

The sequence is that of Putative competence-damage inducible protein from Bacillus mycoides (strain KBAB4) (Bacillus weihenstephanensis).